The primary structure comprises 335 residues: Mycobacterial beta-ketoacyl-[acyl-carrier-protein] synthase III (335 aa).

Active-site residues include Cys-122 and His-258. The segment at 259–263 (QANSR) is ACP-binding. Asn-289 is a catalytic residue.

Belongs to the thiolase-like superfamily. FabH family. Homodimer.

It localises to the cytoplasm. The catalysed reaction is malonyl-[ACP] + dodecanoyl-CoA + H(+) = 3-oxotetradecanoyl-[ACP] + CO2 + CoA. It functions in the pathway lipid metabolism; fatty acid biosynthesis. Its pathway is lipid metabolism; mycolic acid biosynthesis. Its function is as follows. Catalyzes the condensation reaction of fatty acid synthesis by the addition to an acyl acceptor of two carbons from malonyl-ACP. Catalyzes the first condensation reaction which initiates fatty acid synthesis and may therefore play a role in governing the total rate of fatty acid production. Possesses both acetoacetyl-ACP synthase and acetyl transacylase activities. Its substrate specificity determines the biosynthesis of branched-chain and/or straight-chain of fatty acids. This is Mycobacterial beta-ketoacyl-[acyl-carrier-protein] synthase III from Mycobacterium avium (strain 104).